A 308-amino-acid polypeptide reads, in one-letter code: uncharacterized protein (308 aa).

Residues Leu50, Asp90, Asn117, Tyr182, Lys186, Ile222, and Thr224 each contribute to the NADP(+) site. Tyr182 serves as the catalytic Proton acceptor. Lys186 serves as the catalytic Lowers pKa of active site Tyr.

Belongs to the short-chain dehydrogenases/reductases (SDR) family.

This is an uncharacterized protein from Saccharomyces cerevisiae (strain ATCC 204508 / S288c) (Baker's yeast).